A 288-amino-acid polypeptide reads, in one-letter code: Probable HTH-type transcriptional regulator STM3175 (288 aa).

Positions 14-113 (RRVCDHIERH…GQSPRRFRQS (100 aa)) constitute an HTH araC/xylS-type domain. DNA-binding regions (H-T-H motif) lie at residues 31 to 52 (EALS…TTWS) and 80 to 103 (VIDI…KTAF). A putative effector binding domain; binds the peptide antibiotic albicidin region spans residues 111–288 (RQSPDWLAWH…LLTDIYLPLR (178 aa)).

Homodimer.

Functionally, probable transcription factor. The chain is Probable HTH-type transcriptional regulator STM3175 from Salmonella typhimurium (strain LT2 / SGSC1412 / ATCC 700720).